The following is a 271-amino-acid chain: Putative phosphoenolpyruvate synthase regulatory protein (271 aa).

G152–T159 contributes to the ADP binding site.

It belongs to the pyruvate, phosphate/water dikinase regulatory protein family. PSRP subfamily.

It catalyses the reaction [pyruvate, water dikinase] + ADP = [pyruvate, water dikinase]-phosphate + AMP + H(+). The catalysed reaction is [pyruvate, water dikinase]-phosphate + phosphate + H(+) = [pyruvate, water dikinase] + diphosphate. Functionally, bifunctional serine/threonine kinase and phosphorylase involved in the regulation of the phosphoenolpyruvate synthase (PEPS) by catalyzing its phosphorylation/dephosphorylation. This Thiocapsa roseopersicina protein is Putative phosphoenolpyruvate synthase regulatory protein.